Here is a 502-residue protein sequence, read N- to C-terminus: 2,3-bisphosphoglycerate-independent phosphoglycerate mutase (502 aa).

2 residues coordinate Mn(2+): Asp-13 and Ser-63. The active-site Phosphoserine intermediate is Ser-63. Substrate is bound by residues His-117, 146-147 (RD), Arg-177, Arg-183, 251-254 (RSDR), and Lys-324. Positions 389, 393, 430, 431, and 448 each coordinate Mn(2+).

Belongs to the BPG-independent phosphoglycerate mutase family. Monomer. The cofactor is Mn(2+).

The catalysed reaction is (2R)-2-phosphoglycerate = (2R)-3-phosphoglycerate. It functions in the pathway carbohydrate degradation; glycolysis; pyruvate from D-glyceraldehyde 3-phosphate: step 3/5. In terms of biological role, catalyzes the interconversion of 2-phosphoglycerate and 3-phosphoglycerate. This chain is 2,3-bisphosphoglycerate-independent phosphoglycerate mutase, found in Ureaplasma urealyticum serovar 10 (strain ATCC 33699 / Western).